We begin with the raw amino-acid sequence, 126 residues long: Aspartate 1-decarboxylase (126 aa).

The Schiff-base intermediate with substrate; via pyruvic acid role is filled by Ser25. A Pyruvic acid (Ser) modification is found at Ser25. Residue Thr57 participates in substrate binding. The Proton donor role is filled by Tyr58. 73 to 75 (GAA) serves as a coordination point for substrate.

This sequence belongs to the PanD family. Heterooctamer of four alpha and four beta subunits. The cofactor is pyruvate. Is synthesized initially as an inactive proenzyme, which is activated by self-cleavage at a specific serine bond to produce a beta-subunit with a hydroxyl group at its C-terminus and an alpha-subunit with a pyruvoyl group at its N-terminus.

The protein resides in the cytoplasm. It catalyses the reaction L-aspartate + H(+) = beta-alanine + CO2. Its pathway is cofactor biosynthesis; (R)-pantothenate biosynthesis; beta-alanine from L-aspartate: step 1/1. Its function is as follows. Catalyzes the pyruvoyl-dependent decarboxylation of aspartate to produce beta-alanine. This is Aspartate 1-decarboxylase from Salmonella arizonae (strain ATCC BAA-731 / CDC346-86 / RSK2980).